The chain runs to 331 residues: MSLSSKLLVYAYYGSYNLPHDRYGESYHLYRIVHEHLTNTYVSNASCVRRDIATARCLNSGHLCFDVARQLLDVSEVAARLSAWFRCGDATGLCADMQRALADIDRHAPLARRVGRRANIFALDAIADIPSDVTNNLQGIIGRFMHFPRCSGLARVADVFDPDIRADGWWYHKFCVLTYMHLVACGAVPAGSATRLRDAVAKHIGPNDEGNCAPAIAAVYGRFCAIGREHFAHHKTACMHILFQFMRNDLTPADERHPCFGVIKDFGRQCKDTYTDLRTHADALYIHGTTDRQKNALFDLLCCVNASDIDADCYDCVVNKFYATQNKKYKM.

This is an uncharacterized protein from Orgyia pseudotsugata (Douglas-fir tussock moth).